A 417-amino-acid polypeptide reads, in one-letter code: Phosphoglycerate kinase, cytosolic (417 aa).

(2R)-3-phosphoglycerate contacts are provided by Val-23, Asp-24, Phe-25, Asn-26, Arg-39, Ser-61, His-62, Gly-64, Arg-65, Arg-132, His-168, and Arg-169. Positions 214 and 215 each coordinate ADP. Residue Gly-214 coordinates CDP. 2 residues coordinate AMP: Ala-215 and Lys-216. ATP is bound at residue Ala-215. Ala-215 contributes to the Mg(2+) binding site. Lys-216 is a binding site for (2R)-3-phosphoglycerate. Residue Asp-219 participates in CDP binding. Asp-219 contributes to the Mg(2+) binding site. ADP contacts are provided by Lys-220 and Gly-238. Lys-220 is an AMP binding site. Lys-220 provides a ligand contact to ATP. Gly-238 serves as a coordination point for CDP. Ala-239 and Ala-311 together coordinate AMP. The ATP site is built by Ala-239 and Ala-311. ADP is bound by residues Ala-311 and Asn-335. Positions 336 and 341 each coordinate CDP. 4 residues coordinate ADP: Phe-341, Glu-342, Asp-374, and Thr-375. An AMP-binding site is contributed by Glu-342. ATP contacts are provided by Glu-342, Asp-374, and Thr-375. Asp-374 lines the Mg(2+) pocket.

It belongs to the phosphoglycerate kinase family. Monomer. Mg(2+) serves as cofactor.

It is found in the cytoplasm. It carries out the reaction (2R)-3-phosphoglycerate + ATP = (2R)-3-phospho-glyceroyl phosphate + ADP. It participates in carbohydrate degradation; glycolysis; pyruvate from D-glyceraldehyde 3-phosphate: step 2/5. The sequence is that of Phosphoglycerate kinase, cytosolic (PGKB) from Leishmania mexicana.